Consider the following 301-residue polypeptide: Heterogeneous nuclear ribonucleoprotein D-like (301 aa).

2 consecutive RRM domains span residues 29–111 (GKMF…KGKE) and 114–193 (KKVF…QPKE). Lysine 42 is subject to N6-methyllysine. A Glycyl lysine isopeptide (Lys-Gly) (interchain with G-Cter in SUMO2) cross-link involves residue lysine 90. Lysine 97 is subject to N6-acetyllysine. Phosphoserine is present on serine 122. Disordered stretches follow at residues 194-229 (VYRQQQQQQKGGRGAAAGGRGGARGRGRGQGQNWNQ) and 279-301 (GQQSTYGKASRGGGNHQNNYQPY). Residues 204-223 (GGRGAAAGGRGGARGRGRGQ) show a composition bias toward gly residues. Positions 223-301 (QGQNWNQGFN…GNHQNNYQPY (79 aa)) are necessary for interaction with TNPO1. Arginine 289 bears the Dimethylated arginine; alternate mark. Arginine 289 carries the post-translational modification Omega-N-methylarginine; alternate.

Interacts with TNPO1. Interacts with ZNF148. Dimethylation of Arg-289 is probably of the asymmetric type. In terms of tissue distribution, expressed in skeletal muscle, myoblast, myotube, heart, brain, liver, kidney, heart, lung, stomach, small intestine, large intestine, spleen, and testis (at protein level). Expressed in brain, skeletal muscle, heart, lung, liver, stomach, small intestine, large intestine, kidney, spleen and testis.

The protein resides in the nucleus. The protein localises to the cytoplasm. In terms of biological role, acts as a transcriptional regulator. Promotes transcription repression. Promotes transcription activation in differentiated myotubes. Binds to double- and single-stranded DNA sequences. Binds to the transcription suppressor CATR sequence of the COX5B promoter. Binds with high affinity to RNA molecules that contain AU-rich elements (AREs) found within the 3'-UTR of many proto-oncogenes and cytokine mRNAs. Binds both to nuclear and cytoplasmic poly(A) mRNAs. Binds to poly(G) and poly(A), but not to poly(U) or poly(C) RNA homopolymers. Binds to the 5'-ACUAGC-3' RNA consensus sequence. The protein is Heterogeneous nuclear ribonucleoprotein D-like (Hnrnpdl) of Mus musculus (Mouse).